Here is a 153-residue protein sequence, read N- to C-terminus: DNA gyrase inhibitor (153 aa).

The protein belongs to the DNA gyrase inhibitor family. As to quaternary structure, interacts with DNA gyrase.

It is found in the cytoplasm. Inhibits the supercoiling activity of DNA gyrase. Acts by inhibiting DNA gyrase at an early step, prior to (or at the step of) binding of DNA by the gyrase. It protects cells against toxins that target DNA gyrase, by inhibiting activity of these toxins and reducing the formation of lethal double-strand breaks in the cell. This chain is DNA gyrase inhibitor, found in Pantoea sp. (strain At-9b).